The primary structure comprises 159 residues: Protein-export protein SecB (159 aa).

It belongs to the SecB family. Homotetramer, a dimer of dimers. One homotetramer interacts with 1 SecA dimer.

It is found in the cytoplasm. Functionally, one of the proteins required for the normal export of preproteins out of the cell cytoplasm. It is a molecular chaperone that binds to a subset of precursor proteins, maintaining them in a translocation-competent state. It also specifically binds to its receptor SecA. This Nitrobacter hamburgensis (strain DSM 10229 / NCIMB 13809 / X14) protein is Protein-export protein SecB.